A 534-amino-acid chain; its full sequence is Lysophosphatidylcholine acyltransferase 1 (534 aa).

Positions 1–25 (MRLRGRGPRAAPSSSSGAGDARRLA) are disordered. At 1-57 (MRLRGRGPRAAPSSSSGAGDARRLAPPGRNPFVHELRLSALQKAQVAFMTLTLFPIR) the chain is on the cytoplasmic side. A compositionally biased stretch (low complexity) spans 8–19 (PRAAPSSSSGAG). A helical; Signal-anchor for type II membrane protein transmembrane segment spans residues 58-78 (LLFAAFMMLLAWPFALLASLG). At 79-534 (PPDKEPEQPL…GRKNSCKKAD (456 aa)) the chain is on the lumenal side. An HXXXXD motif motif is present at residues 135–140 (HSSYFD). EF-hand domains follow at residues 379 to 414 (PVSDALEDMFSLFDESGGGEIDLREYVVALSVVCRP) and 451 to 486 (VSELTVTDLFQAIDQEDKGRITFDDFCGFAEMYPDY). Positions 392, 394, 398, and 403 each coordinate Ca(2+). The short motif at 531–534 (KKAD) is the Di-lysine motif element.

This sequence belongs to the 1-acyl-sn-glycerol-3-phosphate acyltransferase family. Predominantly expressed in lung where it is enriched in alveolar type II cells. Expressed at lower levels in spleen and brain. Also detected in erythroleukemic cells and reticulocytes. Weakly or not expressed in other tissues.

The protein localises to the endoplasmic reticulum membrane. It is found in the golgi apparatus membrane. It localises to the cell membrane. Its subcellular location is the lipid droplet. The enzyme catalyses a 1-acyl-sn-glycero-3-phosphocholine + an acyl-CoA = a 1,2-diacyl-sn-glycero-3-phosphocholine + CoA. The catalysed reaction is a 1-O-alkyl-sn-glycero-3-phosphocholine + acetyl-CoA = a 1-O-alkyl-2-acetyl-sn-glycero-3-phosphocholine + CoA. It catalyses the reaction a 1-acyl-sn-glycero-3-phosphate + an acyl-CoA = a 1,2-diacyl-sn-glycero-3-phosphate + CoA. It carries out the reaction a 1-O-(1Z-alkenyl)-sn-glycero-3-phosphocholine + an acyl-CoA = a 1-O-(1Z-alkenyl)-2-acyl-sn-glycero-3-phosphocholine + CoA. The enzyme catalyses 1-acyl-sn-glycero-3-phospho-(1'-sn-glycerol) + an acyl-CoA = a 1,2-diacyl-sn-glycero-3-phospho-(1'-sn-glycerol) + CoA. The catalysed reaction is 1-hexadecanoyl-sn-glycero-3-phosphocholine + hexadecanoyl-CoA = 1,2-dihexadecanoyl-sn-glycero-3-phosphocholine + CoA. It catalyses the reaction 1-O-hexadecyl-sn-glycero-3-phosphocholine + hexadecanoyl-CoA = 1-O-hexadecyl-2-hexadecanoyl-sn-glycero-3-phosphocholine + CoA. It carries out the reaction a 1-O-(1Z-alkenyl)-sn-glycero-3-phosphocholine + hexadecanoyl-CoA = 1-O-(1Z)-alkenyl-2-hexadecanoyl-sn-glycero-3-phosphocholine + CoA. The enzyme catalyses 1-hexadecanoyl-sn-glycero-3-phospho-(1'-sn-glycerol) + hexadecanoyl-CoA = 1,2-dihexadecanoyl-sn-glycero-3-phospho-(1'-sn-glycerol) + CoA. The catalysed reaction is 1-dodecanoyl-sn-glycero-3-phosphocholine + hexadecanoyl-CoA = 1-dodecanoyl-2-hexadecanoyl-sn-glycero-3-phosphocholine + CoA. It catalyses the reaction 1-tetradecanoyl-sn-glycero-3-phosphocholine + hexadecanoyl-CoA = 1-tetradecanoyl-2-hexadecanoyl-sn-glycero-3-phosphocholine + CoA. It carries out the reaction 1-O-octadecyl-sn-glycero-3-phosphocholine + hexadecanoyl-CoA = 1-O-octadecyl-2-hexadecanoyl-sn-glycero-3-phosphocholine + CoA. The enzyme catalyses 1-octadecanoyl-sn-glycero-3-phosphocholine + hexadecanoyl-CoA = 1-octadecanoyl-2-hexadecanoyl-sn-glycero-3-phosphocholine + CoA. The catalysed reaction is 1-(9Z-octadecenoyl)-sn-glycero-3-phosphocholine + hexadecanoyl-CoA = 1-(9Z-octadecenoyl)-2-hexadecanoyl-sn-glycero-3-phosphocholine + CoA. It catalyses the reaction 1-eicosanoyl-sn-glycero-3-phosphocholine + hexadecanoyl-CoA = 1-eicosanoyl-2-hexadecanoyl-sn-glycero-3-phosphocholine + CoA. It carries out the reaction hexanoyl-CoA + 1-hexadecanoyl-sn-glycero-3-phosphocholine = 1-hexadecanoyl-2-hexanoyl-sn-glycero-3-phosphocholine + CoA. The enzyme catalyses octanoyl-CoA + 1-hexadecanoyl-sn-glycero-3-phosphocholine = 1-hexadecanoyl-2-octanoyl-sn-glycero-3-phosphocholine + CoA. The catalysed reaction is decanoyl-CoA + 1-hexadecanoyl-sn-glycero-3-phosphocholine = 1-hexadecanoyl-2-decanoyl-sn-glycero-3-phosphocholine + CoA. It catalyses the reaction dodecanoyl-CoA + 1-hexadecanoyl-sn-glycero-3-phosphocholine = 1-hexadecanoyl-2-dodecanoyl-sn-glycero-3-phosphocholine + CoA. It carries out the reaction tetradecanoyl-CoA + 1-hexadecanoyl-sn-glycero-3-phosphocholine = 1-hexadecanoyl-2-tetradecanoyl-sn-glycero-3-phosphocholine + CoA. The enzyme catalyses 1-hexadecanoyl-sn-glycero-3-phosphocholine + (9Z)-octadecenoyl-CoA = 1-hexadecanoyl-2-(9Z-octadecenoyl)-sn-glycero-3-phosphocholine + CoA. The catalysed reaction is (9Z,12Z)-octadecadienoyl-CoA + 1-hexadecanoyl-sn-glycero-3-phosphocholine = 1-hexadecanoyl-2-(9Z,12Z-octadecadienoyl)-sn-glycero-3-phosphocholine + CoA. It catalyses the reaction (4Z,7Z,10Z,13Z,16Z,19Z)-docosahexaenoyl-CoA + 1-hexadecanoyl-sn-glycero-3-phosphocholine = 1-hexadecanoyl-2-(4Z,7Z,10Z,13Z,16Z,19Z-docosahexaenoyl)-sn-glycero-3-phosphocholine + CoA. It carries out the reaction 1-hexadecanoyl-sn-glycero-3-phosphocholine + acetyl-CoA = 1-hexadecanoyl-2-acetyl-sn-glycero-3-phosphocholine + CoA. The enzyme catalyses eicosanoyl-CoA + 1-hexadecanoyl-sn-glycero-3-phosphocholine = 1-hexadecanoyl-2-eicosanoyl-sn-glycero-3-phosphocholine + CoA. The catalysed reaction is 1-O-hexadecyl-sn-glycero-3-phosphocholine + acetyl-CoA = 1-O-hexadecyl-2-acetyl-sn-glycero-3-phosphocholine + CoA. It catalyses the reaction a 1-acyl-sn-glycero-3-phosphocholine + hexadecanoyl-CoA = 1-acyl-2-hexadecanoyl-sn-glycero-3-phosphocholine + CoA. It carries out the reaction a 1-acyl-sn-glycero-3-phosphate + hexadecanoyl-CoA = 1-acyl-2-hexadecanoyl-sn-glycero-3-phosphate + CoA. The enzyme catalyses 1-acyl-sn-glycero-3-phospho-(1'-sn-glycerol) + hexadecanoyl-CoA = 1-acyl-2-hexadecanoyl-sn-glycero-3-phospho-(1'-sn-glycerol) + CoA. The protein operates within lipid metabolism; phospholipid metabolism. With respect to regulation, not activated by inflammatory stimulation. Inhibited by Cu(2+), Fe(2+), Ca(2+) and Mg(2+). Activity is not affected by Co(2+) or Mn(2+). Exhibits both acyltransferase and acetyltransferase activities. Activity is calcium-independent. Catalyzes the conversion of lysophosphatidylcholine (1-acyl-sn-glycero-3-phosphocholine or LPC) into phosphatidylcholine (1,2-diacyl-sn-glycero-3-phosphocholine or PC). Catalyzes the conversion 1-acyl-sn-glycerol-3-phosphate (lysophosphatidic acid or LPA) into 1,2-diacyl-sn-glycerol-3-phosphate (phosphatidic acid or PA) by incorporating an acyl moiety at the sn-2 position of the glycerol backbone. Displays a clear preference for saturated fatty acyl-CoAs, and 1-myristoyl or 1-palmitoyl LPC as acyl donors and acceptors, respectively. Involved in platelet-activating factor (PAF) biosynthesis by catalyzing the conversion of the PAF precursor, 1-O-alkyl-sn-glycero-3-phosphocholine (lyso-PAF) into 1-O-alkyl-2-acetyl-sn-glycero-3-phosphocholine (PAF). May synthesize phosphatidylcholine in pulmonary surfactant, thereby playing a pivotal role in respiratory physiology. Involved in the regulation of lipid droplet number and size. This chain is Lysophosphatidylcholine acyltransferase 1 (Lpcat1), found in Mus musculus (Mouse).